The sequence spans 270 residues: Formamidopyrimidine-DNA glycosylase (270 aa).

Catalysis depends on Pro-2, which acts as the Schiff-base intermediate with DNA. Glu-3 serves as the catalytic Proton donor. The Proton donor; for beta-elimination activity role is filled by Lys-58. His-91, Arg-110, and Arg-151 together coordinate DNA. The FPG-type zinc finger occupies 236–270 (FVYGRGGEFCKVCGSTLREIRLGQRASVYCPRCQR). The Proton donor; for delta-elimination activity role is filled by Arg-260.

The protein belongs to the FPG family. In terms of assembly, monomer. The cofactor is Zn(2+).

It catalyses the reaction Hydrolysis of DNA containing ring-opened 7-methylguanine residues, releasing 2,6-diamino-4-hydroxy-5-(N-methyl)formamidopyrimidine.. The catalysed reaction is 2'-deoxyribonucleotide-(2'-deoxyribose 5'-phosphate)-2'-deoxyribonucleotide-DNA = a 3'-end 2'-deoxyribonucleotide-(2,3-dehydro-2,3-deoxyribose 5'-phosphate)-DNA + a 5'-end 5'-phospho-2'-deoxyribonucleoside-DNA + H(+). Involved in base excision repair of DNA damaged by oxidation or by mutagenic agents. Acts as a DNA glycosylase that recognizes and removes damaged bases. Has a preference for oxidized purines, such as 7,8-dihydro-8-oxoguanine (8-oxoG). Has AP (apurinic/apyrimidinic) lyase activity and introduces nicks in the DNA strand. Cleaves the DNA backbone by beta-delta elimination to generate a single-strand break at the site of the removed base with both 3'- and 5'-phosphates. The protein is Formamidopyrimidine-DNA glycosylase of Pseudomonas aeruginosa (strain LESB58).